A 241-amino-acid chain; its full sequence is Thiamine import ATP-binding protein ThiQ (241 aa).

In terms of domain architecture, ABC transporter spans 7-235 (IRLSDVRFSY…AGPEALRHYI (229 aa)). Position 37–44 (37–44 (GPSGSGKS)) interacts with ATP.

Belongs to the ABC transporter superfamily. Thiamine importer (TC 3.A.1.19.1) family. The complex is composed of two ATP-binding proteins (ThiQ), two transmembrane proteins (ThiP) and a solute-binding protein (ThiB).

Its subcellular location is the cell inner membrane. It carries out the reaction thiamine(out) + ATP + H2O = thiamine(in) + ADP + phosphate + H(+). In terms of biological role, part of the ABC transporter complex ThiBPQ involved in thiamine import. Responsible for energy coupling to the transport system. This chain is Thiamine import ATP-binding protein ThiQ, found in Brucella abortus biovar 1 (strain 9-941).